Here is a 188-residue protein sequence, read N- to C-terminus: Segregation and condensation protein B (188 aa).

The protein belongs to the ScpB family. As to quaternary structure, homodimer. Homodimerization may be required to stabilize the binding of ScpA to the Smc head domains. Component of a cohesin-like complex composed of ScpA, ScpB and the Smc homodimer, in which ScpA and ScpB bind to the head domain of Smc. The presence of the three proteins is required for the association of the complex with DNA.

It localises to the cytoplasm. Functionally, participates in chromosomal partition during cell division. May act via the formation of a condensin-like complex containing Smc and ScpA that pull DNA away from mid-cell into both cell halves. The polypeptide is Segregation and condensation protein B (Lactococcus lactis subsp. lactis (strain IL1403) (Streptococcus lactis)).